Reading from the N-terminus, the 432-residue chain is Interleukin-11 receptor subunit alpha-1 (432 aa).

An N-terminal signal peptide occupies residues 1 to 23 (MSSSCSGLTRVLVAVATALVSSS). Topologically, residues 24 to 372 (SPCPQAWGPP…DPLEQVAVLA (349 aa)) are extracellular. The Ig-like C2-type domain maps to 27–110 (PQAWGPPGVQ…SGGMVTLKLG (84 aa)). Cystine bridges form between cysteine 48–cysteine 94, cysteine 120–cysteine 130, and cysteine 170–cysteine 180. Fibronectin type-III domains follow at residues 112-219 (PPAR…LRPD) and 220-317 (PPQG…TPST). The N-linked (GlcNAc...) asparagine glycan is linked to asparagine 127. A disordered region spans residues 151–170 (KTLPGAESQRESPSTGPWPC). A glycan (N-linked (GlcNAc...) asparagine) is linked at asparagine 194. Residues 304–308 (WSAWS) carry the WSXWS motif motif. 2 disordered regions span residues 309-332 (PEAWGTPSTGPLQDEIPDWSQGHG) and 342-361 (EDSPAPARPSLQPDPRPLDH). The helical transmembrane segment at 373-393 (SLGIFSCLGLAVGALALGLWL) threads the bilayer. The Cytoplasmic segment spans residues 394-432 (RLRRSGKDGPQKPGLLAPMIPVEKLPGIPNLQRTPENFS).

Belongs to the type I cytokine receptor family. Type 3 subfamily. As to quaternary structure, on IL11 binding, forms a multimer complex with IL6ST/gp130. A short soluble form is also released from the membrane by proteolysis. The sIL11RA is formed either by limited proteolysis of membrane-bound receptors, a process referred to as ectodomain shedding, or directly secreted from the cells after alternative mRNA splicing. mIL11RA is cleaved by the proteases ADAM10, ELANE and PRTN3. Widely expressed in all adult tissues and in embryos. Highest levels in kidney, skeletal muscle and embryo.

It localises to the membrane. Its subcellular location is the secreted. Its function is as follows. Receptor for interleukin-11. The receptor systems for IL6, LIF, OSM, CNTF, IL11 and CT1 can utilize IL6ST for initiating signal transmission. The IL11/IL11RA/IL6ST complex may be involved in the control of proliferation and/or differentiation of skeletogenic progenitor or other mesenchymal cells. Essential for the normal development of craniofacial bones and teeth. Functionally, soluble form of IL11 receptor (sIL11RA) that acts as an agonist of IL11 activity. The IL11:sIL11RA complex binds to IL6ST/gp130 on cell surfaces and induces signaling also on cells that do not express membrane-bound IL11RA in a process called IL11 trans-signaling. This is Interleukin-11 receptor subunit alpha-1 from Mus musculus (Mouse).